Consider the following 251-residue polypeptide: Ubiquinone/menaquinone biosynthesis C-methyltransferase UbiE (251 aa).

S-adenosyl-L-methionine contacts are provided by residues T74, D95, and 123–124; that span reads DA.

Belongs to the class I-like SAM-binding methyltransferase superfamily. MenG/UbiE family.

It catalyses the reaction a 2-demethylmenaquinol + S-adenosyl-L-methionine = a menaquinol + S-adenosyl-L-homocysteine + H(+). The catalysed reaction is a 2-methoxy-6-(all-trans-polyprenyl)benzene-1,4-diol + S-adenosyl-L-methionine = a 5-methoxy-2-methyl-3-(all-trans-polyprenyl)benzene-1,4-diol + S-adenosyl-L-homocysteine + H(+). It participates in quinol/quinone metabolism; menaquinone biosynthesis; menaquinol from 1,4-dihydroxy-2-naphthoate: step 2/2. It functions in the pathway cofactor biosynthesis; ubiquinone biosynthesis. In terms of biological role, methyltransferase required for the conversion of demethylmenaquinol (DMKH2) to menaquinol (MKH2) and the conversion of 2-polyprenyl-6-methoxy-1,4-benzoquinol (DDMQH2) to 2-polyprenyl-3-methyl-6-methoxy-1,4-benzoquinol (DMQH2). This Idiomarina loihiensis (strain ATCC BAA-735 / DSM 15497 / L2-TR) protein is Ubiquinone/menaquinone biosynthesis C-methyltransferase UbiE.